Consider the following 2974-residue polypeptide: Mediator of RNA polymerase II transcription subunit 13 (2974 aa).

Composition is skewed to basic and acidic residues over residues 284 to 299, 340 to 367, 374 to 390, and 624 to 633; these read EKEP…KTPE, MFEP…AREV, RREE…RADD, and SREKRKEYQP. Disordered regions lie at residues 284 to 309, 340 to 394, 624 to 654, 677 to 749, 764 to 801, 1032 to 1063, 1099 to 1134, 1140 to 1159, 1281 to 1342, 1416 to 1486, 2052 to 2078, and 2247 to 2309; these read EKEP…PQTT, MFEP…NLED, SREK…KRKV, FNAW…FADI, LYNP…PKEE, PHGS…QDGE, GMLS…YPTP, LQAD…FRST, TLAR…TPTY, QGGL…DATA, ELKK…ATPA, and QDEA…PAGM. The stretch at 351–396 forms a coiled coil; the sequence is KEETAAEKEKRMAAREVRRLRRQRREERRREMEKQRRADDNLEDYD. Basic residues-rich tracts occupy residues 634–654 and 677–688; these read YHRK…KRKV and FNAWKQKKKGPP. Basic and acidic residues predominate over residues 689-717; the sequence is PKKDLAKKEAAADKDKDKDKEKDKEKDKD. The span at 1035 to 1048 shows a compositional bias: basic and acidic residues; it reads SFDHDSEPEFDEQR. 2 stretches are compositionally biased toward polar residues: residues 1122-1134 and 1140-1149; these read IESQ…YPTP and LQADASQAHS. Pro residues-rich tracts occupy residues 1284-1299 and 1326-1340; these read RPPP…PTPM and PAYP…PTTP. Residues 1443-1464 show a composition bias toward polar residues; the sequence is IRNTDAPNDPTVSKLQSAVSRN. The segment covering 1473-1486 has biased composition (low complexity); that stretch reads AATSIPTATDDATA. The segment covering 2064 to 2073 has biased composition (polar residues); sequence STQSENSEGN. Residues 2220-2301 are a coiled coil; sequence AVEGRLKRQK…EQYPAEESQA (82 aa). 2 stretches are compositionally biased toward basic and acidic residues: residues 2247–2258 and 2281–2292; these read QDEADKREKMDE and EEKKRNKQKENE. Positions 2347 to 2974 are mediates transcriptional repression; the sequence is WKQRDTRVQN…LYHSVARLLV (628 aa).

The protein belongs to the Mediator complex subunit 13 family. As to quaternary structure, component of the Mediator complex.

The protein resides in the nucleus. Its function is as follows. Component of the Mediator complex, a coactivator involved in regulated gene transcription of nearly all RNA polymerase II-dependent genes. Mediator functions as a bridge to convey information from gene-specific regulatory proteins to the basal RNA polymerase II transcription machinery. Mediator is recruited to promoters by direct interactions with regulatory proteins and serves as a scaffold for the assembly of a functional preinitiation complex with RNA polymerase II and the general transcription factors. The polypeptide is Mediator of RNA polymerase II transcription subunit 13 (let-19) (Caenorhabditis briggsae).